A 608-amino-acid polypeptide reads, in one-letter code: Protein trichome birefringence (608 aa).

A helical; Signal-anchor for type II membrane protein transmembrane segment spans residues 38 to 58 (TFAYAFVITFVSFTLFFAFSP). Polar residues-rich tracts occupy residues 101 to 137 (STKP…QTPA) and 145 to 203 (AKNT…TSPA). The interval 101–236 (STKPTNRSSD…TPKKQTKTVD (136 aa)) is disordered. Residues 215–227 (TNSSSNSSTASST) show a composition bias toward low complexity. Positions 328-330 (GDS) match the GDS motif motif. The short motif at 573–587 (DCSHWCLPGVPDSWN) is the DCXHWCLPGXXDXWN motif element.

Belongs to the PC-esterase family. TBL subfamily. As to expression, expressed in leaf vasculature, growing part of the root, expanding inflorescence stems and trichomes.

It localises to the membrane. Required during cellulose deposition. May act as a bridging protein that binds pectin and other cell wall polysaccharides. Probably involved in maintaining esterification of pectins. May be involved in the specific O-acetylation of cell wall polymers. This Arabidopsis thaliana (Mouse-ear cress) protein is Protein trichome birefringence (TBR).